Here is a 26-residue protein sequence, read N- to C-terminus: Beta-hexosaminidase (26 aa).

In terms of processing, glycosylated. Detected in dry seeds and cotyledons.

It carries out the reaction Hydrolysis of terminal non-reducing N-acetyl-D-hexosamine residues in N-acetyl-beta-D-hexosaminides.. Inhibited by AgNO(3) at a concentration of 0.1 mM. Strongly inhibited by CdCl(2), ZnCl(2) and FeCl(3) and moderately by CoCl(2), CuSO(4) and NiCl(2) at 10 mM concentration. CaCl(2), MgCl(2), MnSO(4) and KI also have a slight inhibitory effect of 20%-25% at 10 mM concentration. Activated to a small extent by MgCl(2) at 0.1 mM concentration but inhibited with increasing concentration. Not affected by carbohydrates such as fucose, galactose and glucose but displays a slight decrease in activity up to 25% with lactose, alpha-mannose and N-acetyl-galactosamine (GalNAc). In terms of biological role, has hexosaminidase activity. Active with both p-nitrophenyl-beta-D-N-acetylglucosamine (pNP-GlcNAc) and p-nitrophenyl-beta-D-N-acetylgalactosamine (pNP-GalNAc). Not active toward p-nitrophenyl-beta-D-N,N'-diacetylchitobiose (pNP-(GlcNAc)2) or p-nitrophenyl-beta-D-N,N',N''-triacetylchitobiose (pNP-(GlcNAc)3). Removes terminal GlcNAc and may be involved in storage protein degradation. This chain is Beta-hexosaminidase, found in Lupinus albus (White lupine).